The primary structure comprises 339 residues: MTTIALDAMGGDHGPKVVVPAALDSLEQNPSLRLVLVGDESVLREYLKDTRRRFGDRLRVHHASEVVEMHDQPSKALRNKKDSSMRVAIDLVKQGDADACVSAGNTGALMAIAKFVLKTLPGIDRPAIIAAVPSMTGHTHVLDLGANVDCTAEHLYQFAVMGYELVRAVEEREHPTVGLLNIGEEEIKGNEQVKRAAELLSGAHVNFVGFVEGDDIFKGSVDIVVTDGFVGNVALKSSEGLAKMISHFIKREFSSSLLTRLAGLIALPVLNAFKHRIDPRQYNGASLLGLRGIVIKSHGNADRFSFANAVTIAVKEVEKAVPHRIGERMTDVFAARNLA.

Belongs to the PlsX family. In terms of assembly, homodimer. Probably interacts with PlsY.

It is found in the cytoplasm. The enzyme catalyses a fatty acyl-[ACP] + phosphate = an acyl phosphate + holo-[ACP]. It functions in the pathway lipid metabolism; phospholipid metabolism. Its function is as follows. Catalyzes the reversible formation of acyl-phosphate (acyl-PO(4)) from acyl-[acyl-carrier-protein] (acyl-ACP). This enzyme utilizes acyl-ACP as fatty acyl donor, but not acyl-CoA. This is Phosphate acyltransferase from Methylococcus capsulatus (strain ATCC 33009 / NCIMB 11132 / Bath).